A 106-amino-acid polypeptide reads, in one-letter code: Large ribosomal subunit protein uL24 (106 aa).

It belongs to the universal ribosomal protein uL24 family. In terms of assembly, part of the 50S ribosomal subunit.

Its function is as follows. One of two assembly initiator proteins, it binds directly to the 5'-end of the 23S rRNA, where it nucleates assembly of the 50S subunit. In terms of biological role, one of the proteins that surrounds the polypeptide exit tunnel on the outside of the subunit. This Thermosipho africanus (strain TCF52B) protein is Large ribosomal subunit protein uL24.